The primary structure comprises 144 residues: Succinate dehydrogenase cytochrome b560 subunit (144 aa).

The next 3 membrane-spanning stretches (helical) occupy residues 40–60, 84–104, and 124–144; these read IFHR…ILIL, GFLF…HLFA, and LTGY…WIIF. His101 is a heme binding site.

Belongs to the cytochrome b560 family. In terms of assembly, forms part of complex II containing four subunits: a 70 kDa flavoprotein (FP), a 27 kDa iron-sulfur protein (IP), a cytochrome B and a membrane-anchoring protein. Heme is required as a cofactor.

It is found in the mitochondrion inner membrane. It participates in carbohydrate metabolism; tricarboxylic acid cycle. Membrane-anchoring subunit of succinate dehydrogenase (SDH) that is involved in complex II of the mitochondrial electron transport chain and is responsible for transferring electrons from succinate to ubiquinone (coenzyme Q). The polypeptide is Succinate dehydrogenase cytochrome b560 subunit (SDH3) (Reclinomonas americana).